The chain runs to 148 residues: Protein-arginine-phosphatase (148 aa).

The Nucleophile role is filled by Cys-9. 10–15 (TGNTCR) is a binding site for substrate. Arg-15 is a catalytic residue. Asp-117 serves as the catalytic Proton donor.

This sequence belongs to the low molecular weight phosphotyrosine protein phosphatase family. Is present in solution as a mixture of monomers, dimers and higher order oligomers (trimers and tetramers).

The catalysed reaction is N(omega)-phospho-L-arginyl-[protein] + H2O = L-arginyl-[protein] + phosphate. Irreversibly inhibited by the synthetic inhibitor cyc-SeCN-amidine, which inactivates the enzyme by inducing disulfide bond formation between the two active site cysteine residues Cys-9 and Cys-14. Functionally, catalyzes the specific dephosphorylation of phosphoarginine residues in proteins. Probably counteracts the protein arginine kinase McsB in vivo. Exhibits almost no activity against pTyr peptides. Protein arginine phosphorylation has a physiologically important role and is involved in the regulation of many critical cellular processes, such as protein homeostasis, motility, competence, and stringent and stress responses, by regulating gene expression and protein activity. The sequence is that of Protein-arginine-phosphatase (ywle) from Geobacillus stearothermophilus (Bacillus stearothermophilus).